A 322-amino-acid chain; its full sequence is Nitrilase (322 aa).

One can recognise a CN hydrolase domain in the interval 5 to 283 (VRVGAVQSEP…EAILTADIDL (279 aa)). The active-site Proton acceptor is the Glu45. Lys127 is an active-site residue. The active-site Nucleophile is Cys162.

The protein belongs to the carbon-nitrogen hydrolase superfamily. Nitrilase family.

It carries out the reaction a nitrile + 2 H2O = a carboxylate + NH4(+). In terms of biological role, nitrilase that hydrolyzes preferentially 4-cyanopyridine. This chain is Nitrilase, found in Talaromyces marneffei (strain ATCC 18224 / CBS 334.59 / QM 7333) (Penicillium marneffei).